A 75-amino-acid polypeptide reads, in one-letter code: Tautomerase PptA (75 aa).

Catalysis depends on Pro2, which acts as the Proton acceptor; via imino nitrogen.

Belongs to the 4-oxalocrotonate tautomerase family. PptA subfamily. Homodimer.

It localises to the cytoplasm. This chain is Tautomerase PptA, found in Escherichia coli O127:H6 (strain E2348/69 / EPEC).